Consider the following 281-residue polypeptide: 2-dehydro-3-deoxyphosphooctonate aldolase (281 aa).

Belongs to the KdsA family.

Its subcellular location is the cytoplasm. The catalysed reaction is D-arabinose 5-phosphate + phosphoenolpyruvate + H2O = 3-deoxy-alpha-D-manno-2-octulosonate-8-phosphate + phosphate. It functions in the pathway carbohydrate biosynthesis; 3-deoxy-D-manno-octulosonate biosynthesis; 3-deoxy-D-manno-octulosonate from D-ribulose 5-phosphate: step 2/3. Its pathway is bacterial outer membrane biogenesis; lipopolysaccharide biosynthesis. This Pseudomonas syringae pv. syringae (strain B728a) protein is 2-dehydro-3-deoxyphosphooctonate aldolase.